Here is a 255-residue protein sequence, read N- to C-terminus: Lactose phosphotransferase system repressor (255 aa).

In terms of domain architecture, HTH deoR-type spans 3–58; it reads KKRRLEKILDMLKIDGTITIKEIIDELDISDMTARRDLDALEADGLLTRTHGGAQL. Residues 20-39 constitute a DNA-binding region (H-T-H motif); the sequence is ITIKEIIDELDISDMTARRD.

In terms of biological role, repressor of the lactose catabolism operon. Galactose-6-phosphate is the inducer. In Lactococcus lactis subsp. lactis (Streptococcus lactis), this protein is Lactose phosphotransferase system repressor (lacR).